The sequence spans 128 residues: Early 3 14.7 kDa protein (128 aa).

It belongs to the adenoviridae E3_15 family. In terms of assembly, may bind to host IKBKG, OPTN and RRAGA.

Its subcellular location is the host cytoplasm. It localises to the host nucleus. May prevent Nf-kappaB activation by immune signals like Tumor necrosis factor, presumably by inhibiting NFKB1 dimer DNA-binding. May act directly at the TNF receptor to inhibit signaling. This Human adenovirus C serotype 2 (HAdV-2) protein is Early 3 14.7 kDa protein.